The primary structure comprises 730 residues: Hemolytic phospholipase C (730 aa).

The tat-type signal signal peptide spans 1-38; it reads MTENWKFRRRTFLKHGAQAATLAGLSGLFPETLRRALA.

It belongs to the bacterial phospholipase C family. Post-translationally, predicted to be exported by the Tat system. The position of the signal peptide cleavage has not been experimentally proven.

It carries out the reaction a 1,2-diacyl-sn-glycero-3-phosphocholine + H2O = phosphocholine + a 1,2-diacyl-sn-glycerol + H(+). Its function is as follows. Hydrolyzes sphingomyelin in addition to phosphatidylcholine. The chain is Hemolytic phospholipase C (plcH) from Pseudomonas aeruginosa (strain ATCC 15692 / DSM 22644 / CIP 104116 / JCM 14847 / LMG 12228 / 1C / PRS 101 / PAO1).